The chain runs to 371 residues: Phospho-N-acetylmuramoyl-pentapeptide-transferase (371 aa).

The next 9 helical transmembrane spans lie at 19–39, 48–68, 95–115, 119–139, 155–175, 180–200, 227–247, 284–304, and 349–369; these read LYWL…IYSG, IVAP…WAVP, TMGG…WVAA, NLLE…VGWF, AKLR…WLFL, ISGL…FLAI, AIAF…LMIF, AVGL…LFLV, and VVST…GLNA.

Belongs to the glycosyltransferase 4 family. MraY subfamily. Mg(2+) serves as cofactor.

It localises to the cell inner membrane. It carries out the reaction UDP-N-acetyl-alpha-D-muramoyl-L-alanyl-gamma-D-glutamyl-meso-2,6-diaminopimeloyl-D-alanyl-D-alanine + di-trans,octa-cis-undecaprenyl phosphate = di-trans,octa-cis-undecaprenyl diphospho-N-acetyl-alpha-D-muramoyl-L-alanyl-D-glutamyl-meso-2,6-diaminopimeloyl-D-alanyl-D-alanine + UMP. It participates in cell wall biogenesis; peptidoglycan biosynthesis. Catalyzes the initial step of the lipid cycle reactions in the biosynthesis of the cell wall peptidoglycan: transfers peptidoglycan precursor phospho-MurNAc-pentapeptide from UDP-MurNAc-pentapeptide onto the lipid carrier undecaprenyl phosphate, yielding undecaprenyl-pyrophosphoryl-MurNAc-pentapeptide, known as lipid I. This is Phospho-N-acetylmuramoyl-pentapeptide-transferase from Acaryochloris marina (strain MBIC 11017).